The primary structure comprises 140 residues: Large ribosomal subunit protein uL24 (140 aa).

The protein belongs to the universal ribosomal protein uL24 family. In terms of assembly, part of the 50S ribosomal subunit.

One of two assembly initiator proteins, it binds directly to the 5'-end of the 23S rRNA, where it nucleates assembly of the 50S subunit. Functionally, located at the polypeptide exit tunnel on the outside of the subunit. The chain is Large ribosomal subunit protein uL24 from Nanoarchaeum equitans (strain Kin4-M).